Here is a 115-residue protein sequence, read N- to C-terminus: Ribonuclease P protein component (115 aa).

The protein belongs to the RnpA family. As to quaternary structure, consists of a catalytic RNA component (M1 or rnpB) and a protein subunit.

It carries out the reaction Endonucleolytic cleavage of RNA, removing 5'-extranucleotides from tRNA precursor.. Functionally, RNaseP catalyzes the removal of the 5'-leader sequence from pre-tRNA to produce the mature 5'-terminus. It can also cleave other RNA substrates such as 4.5S RNA. The protein component plays an auxiliary but essential role in vivo by binding to the 5'-leader sequence and broadening the substrate specificity of the ribozyme. The polypeptide is Ribonuclease P protein component (Bacillus mycoides (strain KBAB4) (Bacillus weihenstephanensis)).